An 879-amino-acid polypeptide reads, in one-letter code: Metabotropic glutamate receptor 3 (879 aa).

The first 22 residues, 1-22 (MKMLTRLQVLTLALFSKGFLLS), serve as a signal peptide directing secretion. At 23–576 (LGDHNFLRRE…EDYIRWEDAW (554 aa)) the chain is on the extracellular side. A disulfide bridge links C57 with C99. L-glutamate-binding positions include S151 and 172 to 174 (AST). Residue N209 is glycosylated (N-linked (GlcNAc...) asparagine). Y222 is a binding site for L-glutamate. 7 disulfide bridges follow: C240/C527, C361/C373, C412/C419, C509/C528, C513/C531, C534/C546, and C549/C562. The N-linked (GlcNAc...) asparagine glycan is linked to N292. D301 provides a ligand contact to L-glutamate. K389 is an L-glutamate binding site. N-linked (GlcNAc...) asparagine glycosylation is found at N414 and N439. Residues 577–599 (AIGPVTIACLGFMCTCMVVTVFI) traverse the membrane as a helical segment. Topologically, residues 600–613 (KHNNTPLVKASGRE) are cytoplasmic. Residues 614–634 (LCYILLFGVGLSYCMTFFFIA) form a helical membrane-spanning segment. Topologically, residues 635-645 (KPSPVICALRR) are extracellular. The chain crosses the membrane as a helical span at residues 646-664 (LGLGSSFAICYSALLTKTN). The Cytoplasmic segment spans residues 665-688 (CIARIFDGVKNGAQRPKFISPSSQ). The helical transmembrane segment at 689–709 (VFICLGLILVQIVMVSVWLIL) threads the bilayer. Residues 710–734 (EAPGTRRYTLAEKRETVILKCNVKD) are Extracellular-facing. The chain crosses the membrane as a helical span at residues 735 to 756 (SSMLISLTYDVILVILCTVYAF). Topologically, residues 757–769 (KTRKCPENFNEAK) are cytoplasmic. Residues 770 to 792 (FIGFTMYTTCIIWLAFLPIFYVT) form a helical membrane-spanning segment. Residues 793–802 (SSDYRVQTTT) lie on the Extracellular side of the membrane. Residues 803 to 828 (MCISVSLSGFVVLGCLFAPKVHIILF) form a helical membrane-spanning segment. Residues 829–879 (QPQKNVVTHRLHLNRFSVSGTGTTYSQSSASTYVPTVCNGREVLDSTTSSL) lie on the Cytoplasmic side of the membrane.

The protein belongs to the G-protein coupled receptor 3 family. In terms of assembly, interacts with TAMALIN. As to expression, detected in brain cortex, thalamus, subthalamic nucleus, substantia nigra, hypothalamus, hippocampus, corpus callosum, caudate nucleus and amygdala.

The protein localises to the cell membrane. Its function is as follows. G-protein coupled receptor for glutamate. Ligand binding causes a conformation change that triggers signaling via guanine nucleotide-binding proteins (G proteins) and modulates the activity of down-stream effectors. Signaling inhibits adenylate cyclase activity. This Homo sapiens (Human) protein is Metabotropic glutamate receptor 3 (GRM3).